The chain runs to 417 residues: SNF1 protein kinase subunit beta-3 (417 aa).

Positions 1-12 (MAGDNPENKDAS) are enriched in basic and acidic residues. The interval 1–37 (MAGDNPENKDASMLDVSDAASNTTINGKHSADSTNEA) is disordered. Residues S12, S21, S44, and S135 each carry the phosphoserine modification. Residues 19 to 37 (AASNTTINGKHSADSTNEA) are compositionally biased toward polar residues. Disordered regions lie at residues 64–155 (SSLI…VEGK) and 250–269 (GNEPQQHLAEKKANHVDDSK). The segment covering 118 to 136 (TGNTLQKMDYQPSQQPDSL) has biased composition (polar residues). Residues 137 to 149 (QNQGFQQQQEQQQ) show a composition bias toward low complexity. Positions 152 to 342 (VEGKKGRAMM…DQQQNNHQNM (191 aa)) are kinase-interacting sequence (KIS); required for interaction with SNF1. A compositionally biased stretch (basic and acidic residues) spans 257-269 (LAEKKANHVDDSK). A phosphoserine mark is found at S276 and S279. Residues 343-417 (AWLTPPQLPP…VTQILYTPLQ (75 aa)) form an association with SNF1 kinase complex (ASC) domain; required for interaction with SNF4 region.

Belongs to the 5'-AMP-activated protein kinase beta subunit family. Component of the SNF1 kinase complex, a heterotrimeric complex composed of the catalytic alpha subunit SNF1, one of the three related beta subunits SIP1, SIP2 or GAL83, and the regulatory gamma subunit SNF4. The beta subunit serves as a bridge between the catalytic and the regulatory subunit. Interacts (via KIS domain) with SNF1. Interacts (via ASC domain) with SNF4. Interacts with REE1. Post-translationally, phosphorylated by SNF1 in vitro.

The protein resides in the cytoplasm. It is found in the nucleus. Functionally, beta subunit of the SNF1 kinase complex, which is required for transcriptional, metabolic, and developmental adaptations in response to glucose limitation. Has a structural role, mediating heterotrimer formation, and a regulatory role, defining carbon source-regulated subcellular location and substrate specificity of the SNF1 kinase complex. Promotes the relocalization of the SNF1 kinase complex to the nucleus upon shift to nonfermentable carbon sources. The protein is SNF1 protein kinase subunit beta-3 (GAL83) of Saccharomyces cerevisiae (strain ATCC 204508 / S288c) (Baker's yeast).